We begin with the raw amino-acid sequence, 338 residues long: CRISPR-associated endonuclease Cas1 (338 aa).

Residues Glu155, His220, and Glu235 each coordinate Mn(2+).

This sequence belongs to the CRISPR-associated endonuclease Cas1 family. In terms of assembly, homodimer, forms a heterotetramer with a Cas2 homodimer. Requires Mg(2+) as cofactor. The cofactor is Mn(2+).

Its function is as follows. CRISPR (clustered regularly interspaced short palindromic repeat), is an adaptive immune system that provides protection against mobile genetic elements (viruses, transposable elements and conjugative plasmids). CRISPR clusters contain spacers, sequences complementary to antecedent mobile elements, and target invading nucleic acids. CRISPR clusters are transcribed and processed into CRISPR RNA (crRNA). Acts as a dsDNA endonuclease. Involved in the integration of spacer DNA into the CRISPR cassette. The type III-A Csm effector complex binds crRNA and acts as a crRNA-guided RNase, DNase and cyclic oligoadenylate synthase; binding of target RNA cognate to the crRNA is required for all activities. This Mycobacterium tuberculosis (strain CDC 1551 / Oshkosh) protein is CRISPR-associated endonuclease Cas1.